Here is a 48-residue protein sequence, read N- to C-terminus: Phosphatidylserine decarboxylase proenzyme (48 aa).

It belongs to the phosphatidylserine decarboxylase family. Type 1 subfamily. Pyruvate is required as a cofactor.

It carries out the reaction a 1,2-diacyl-sn-glycero-3-phospho-L-serine + H(+) = a 1,2-diacyl-sn-glycero-3-phosphoethanolamine + CO2. It participates in phospholipid metabolism; phosphatidylethanolamine biosynthesis; phosphatidylethanolamine from CDP-diacylglycerol: step 2/2. This Azotobacter vinelandii protein is Phosphatidylserine decarboxylase proenzyme (psd).